Here is a 179-residue protein sequence, read N- to C-terminus: Large ribosomal subunit protein uL5 (179 aa).

It belongs to the universal ribosomal protein uL5 family. Part of the 50S ribosomal subunit; part of the 5S rRNA/L5/L18/L25 subcomplex. Contacts the 5S rRNA and the P site tRNA. Forms a bridge to the 30S subunit in the 70S ribosome.

Its function is as follows. This is one of the proteins that bind and probably mediate the attachment of the 5S RNA into the large ribosomal subunit, where it forms part of the central protuberance. In the 70S ribosome it contacts protein S13 of the 30S subunit (bridge B1b), connecting the 2 subunits; this bridge is implicated in subunit movement. Contacts the P site tRNA; the 5S rRNA and some of its associated proteins might help stabilize positioning of ribosome-bound tRNAs. The polypeptide is Large ribosomal subunit protein uL5 (Buchnera aphidicola subsp. Schizaphis graminum (strain Sg)).